A 424-amino-acid polypeptide reads, in one-letter code: MHAPLTAEQRDVYDKYKFATYARSVALTRAQLDQWRDNKVIVPEPVSRAETLRVEAATRGQSKNALWNLLRLDRSTASRSSGGVALRSSALAFGNAQENRLKLANGELFERLGRLAAERAGCPVAETVLDCGMFISAFGLHSASPDAYFAMADGSCVPVEIKCPFNYRDTTVDQMRLELGKANRKYRVKHTALLVNKAGPAQFEVVKTHDHYRQMQRQMYVMRNAPVCFYVVRFKHNLVALAVPRDDDFCRKEAAAEGAAFVAFATENAGRVQFKRGDRRRASFAQNAADHGYNAAQVDALVRRGLYLSYGQLRCGHCDAFALDGPRAFELAMARPHEQCDGLALQEHEFDNVAFLDFTKRYTSLVDKRCDDARALRVDGFYVDDAGAVKTFCCGVHGSNASRRHLPTCSYYLAMGVNKIQNNM.

The protein belongs to the baculo-herpesviridae alkaline nuclease family. In terms of assembly, interacts with LEF-3.

The protein localises to the host nucleus. May play a role in maturation and encapsidation of viral replicated genome, by promoting DNA homologous recombination. Exhibits endonuclease and 5'-&gt;3' exonuclease activities. The endonuclease activity displays a specificity for ssDNA in vitro. The protein is Alkaline nuclease (ALK-EXO) of Orgyia pseudotsugata (Douglas-fir tussock moth).